The following is a 32-amino-acid chain: Conotoxin pr6b (32 aa).

A 4-hydroxyproline mark is found at proline 6, proline 13, proline 20, and proline 29. 3 disulfide bridges follow: cysteine 7–cysteine 18, cysteine 14–cysteine 23, and cysteine 17–cysteine 31.

As to expression, expressed by the venom duct.

Its subcellular location is the secreted. Functionally, intraperitoneal injection into fish (0.5 nmol) provokes vertical suspension and paralysis after 6 minutes. This chain is Conotoxin pr6b, found in Conus parius (Cone snail).